We begin with the raw amino-acid sequence, 226 residues long: ATP-dependent dethiobiotin synthetase BioD (226 aa).

12–17 (DAGKTV) is a binding site for ATP. Thr-16 is a Mg(2+) binding site. The active site involves Lys-39. Ser-43 is a substrate binding site. Residues Asp-47, 108–111 (EGVG), 168–169 (NC), 200–202 (PYL), and Asn-207 each bind ATP. 2 residues coordinate Mg(2+): Asp-47 and Glu-108.

The protein belongs to the dethiobiotin synthetase family. In terms of assembly, homodimer. Mg(2+) serves as cofactor.

Its subcellular location is the cytoplasm. It carries out the reaction (7R,8S)-7,8-diammoniononanoate + CO2 + ATP = (4R,5S)-dethiobiotin + ADP + phosphate + 3 H(+). It catalyses the reaction (7R,8S)-8-amino-7-(carboxyamino)nonanoate + ATP = (4R,5S)-dethiobiotin + ADP + phosphate + H(+). Its pathway is cofactor biosynthesis; biotin biosynthesis; biotin from 7,8-diaminononanoate: step 1/2. Functionally, catalyzes a mechanistically unusual reaction, the ATP-dependent insertion of CO2 between the N7 and N8 nitrogen atoms of 7,8-diaminopelargonic acid (DAPA, also called 7,8-diammoniononanoate) to form a ureido ring. This cyanobacterium does not encode bioA (which catalyzes the formation of the precursor for this reaction in the cannonical pathway), instead it encodes bioU, which replaces bioA and also performs the first half of the cannonical BioD reaction. Thus in this organism BioD has a different substrate. The polypeptide is ATP-dependent dethiobiotin synthetase BioD (Cyanothece sp. (strain PCC 7425 / ATCC 29141)).